Here is a 288-residue protein sequence, read N- to C-terminus: Thiamine-monophosphate kinase (288 aa).

Mg(2+) contacts are provided by Asp20, Thr30, and Asp32. Position 39 (Asp39) interacts with substrate. Positions 60 and 107 each coordinate Mg(2+). Residues 106–107 (GD) and Arg130 each bind ATP. Asp188 is a binding site for Mg(2+). An ATP-binding site is contributed by Ser190. Residue Asp191 participates in Mg(2+) binding. Trp286 contributes to the substrate binding site.

This sequence belongs to the thiamine-monophosphate kinase family.

The catalysed reaction is thiamine phosphate + ATP = thiamine diphosphate + ADP. The protein operates within cofactor biosynthesis; thiamine diphosphate biosynthesis; thiamine diphosphate from thiamine phosphate: step 1/1. In terms of biological role, catalyzes the ATP-dependent phosphorylation of thiamine-monophosphate (TMP) to form thiamine-pyrophosphate (TPP), the active form of vitamin B1. The sequence is that of Thiamine-monophosphate kinase from Halobacterium salinarum (strain ATCC 700922 / JCM 11081 / NRC-1) (Halobacterium halobium).